The chain runs to 222 residues: Arginine ABC transporter permease protein ArtM (222 aa).

The Periplasmic portion of the chain corresponds to 1–15 (MFEYLPELMKGLHTS). The region spanning 12-208 (LHTSLTLTVA…VVNGLLTLMM (197 aa)) is the ABC transmembrane type-1 domain. Residues 16–36 (LTLTVASLIVALILALIFTII) traverse the membrane as a helical segment. Residues 37-49 (LTLKTPVLVWLVR) lie on the Cytoplasmic side of the membrane. The chain crosses the membrane as a helical span at residues 50 to 70 (GYITLFTGTPLLVQIFLIYYG). The Periplasmic portion of the chain corresponds to 71–79 (PGQFPTLQE). The helical transmembrane segment at 80 to 100 (YPALWHLLSEPWLCALIALSL) threads the bilayer. Topologically, residues 101–154 (NSAAYTTQLFYGAIRAIPEGQWQSCSALGMSKKDTLAILLPYAFKRSLSSYSNE) are cytoplasmic. The chain crosses the membrane as a helical span at residues 155–175 (VVLVFKSTSLAYTITLMEVMG). At 176–186 (YSQLLYGRTYD) the chain is on the periplasmic side. A helical transmembrane segment spans residues 187–207 (VMVFGAAGIIYLVVNGLLTLM). Over 208-222 (MRLIERKALAFERRN) the chain is Cytoplasmic.

It belongs to the binding-protein-dependent transport system permease family. HisMQ subfamily. The complex is composed of two ATP-binding proteins (ArtP), two transmembrane proteins (ArtM and ArtQ) and two solute-binding proteins (ArtJ and ArtI).

It localises to the cell inner membrane. Its function is as follows. Part of the ABC transporter complex ArtPIQMJ involved in arginine transport. Probably responsible for the translocation of the substrate across the membrane. The chain is Arginine ABC transporter permease protein ArtM (artM) from Escherichia coli (strain K12).